Consider the following 248-residue polypeptide: Biosynthetic peptidoglycan transglycosylase (248 aa).

The helical transmembrane segment at 17–37 (LLIFFFASTILAVIVYRFMPV) threads the bilayer.

Belongs to the glycosyltransferase 51 family.

The protein resides in the cell inner membrane. It catalyses the reaction [GlcNAc-(1-&gt;4)-Mur2Ac(oyl-L-Ala-gamma-D-Glu-L-Lys-D-Ala-D-Ala)](n)-di-trans,octa-cis-undecaprenyl diphosphate + beta-D-GlcNAc-(1-&gt;4)-Mur2Ac(oyl-L-Ala-gamma-D-Glu-L-Lys-D-Ala-D-Ala)-di-trans,octa-cis-undecaprenyl diphosphate = [GlcNAc-(1-&gt;4)-Mur2Ac(oyl-L-Ala-gamma-D-Glu-L-Lys-D-Ala-D-Ala)](n+1)-di-trans,octa-cis-undecaprenyl diphosphate + di-trans,octa-cis-undecaprenyl diphosphate + H(+). It functions in the pathway cell wall biogenesis; peptidoglycan biosynthesis. Functionally, peptidoglycan polymerase that catalyzes glycan chain elongation from lipid-linked precursors. This is Biosynthetic peptidoglycan transglycosylase from Bacteroides thetaiotaomicron (strain ATCC 29148 / DSM 2079 / JCM 5827 / CCUG 10774 / NCTC 10582 / VPI-5482 / E50).